The sequence spans 463 residues: MGSKSPEGHWQAPHASNSNELKPANPDPQTSQNGSGSADLDRGVIGDDDDDDEDAEENGVNTETPNVEKKKKRKKSNKKKKKKTKSGTLSVTELKQTSPPRVLVSTLFPSEYPVGELVPYDCTTRTTDEESRYNSRLWDDDFLPDYRQAAEIHRQVRQYAQKELIKPGATLLSIAEGIEDGVRALSGHQGLEPGDFFKAGMGFPTGLCLNHIAAHWTPNPREKDVILDKGDVLKVDFGVHVNGRIVDSAFTVAFDDKYDNLLTAVREATNTGIKHAGVDARMSDIGAAIQEVMESYEVEIDGKVFPVKAIRNITGHDILRYHIHGGKQIPFIKNNNQDKMEEGEVYAIETFGSTGRGFLDDDVGVYGYGRNENMSGANLRLSSAKSLLKTIDANFGSIVFSRRYLERLGVKNYLLGMKNLVDNGIVECYSPLVDVKGSYTAQFEHTILLHSGGKEVISRGDDY.

Positions 1–97 are disordered; the sequence is MGSKSPEGHW…TLSVTELKQT (97 aa). Residues 27–36 are compositionally biased toward polar residues; it reads DPQTSQNGSG. Over residues 46-57 the composition is skewed to acidic residues; it reads GDDDDDDEDAEE. The segment covering 69–85 has biased composition (basic residues); sequence KKKKRKKSNKKKKKKTK. Residues 86–97 are compositionally biased toward polar residues; that stretch reads SGTLSVTELKQT. Position 215 (H215) interacts with substrate. A divalent metal cation contacts are provided by D236, D247, and H316. H324 is a binding site for substrate. A divalent metal cation-binding residues include E349 and E444.

It belongs to the peptidase M24A family. Methionine aminopeptidase eukaryotic type 2 subfamily. The cofactor is Co(2+). Zn(2+) serves as cofactor. Requires Mn(2+) as cofactor. It depends on Fe(2+) as a cofactor.

The protein localises to the cytoplasm. It carries out the reaction Release of N-terminal amino acids, preferentially methionine, from peptides and arylamides.. Its function is as follows. Cotranslationally removes the N-terminal methionine from nascent proteins. The N-terminal methionine is often cleaved when the second residue in the primary sequence is small and uncharged (Met-Ala-, Cys, Gly, Pro, Ser, Thr, or Val). The chain is Methionine aminopeptidase 2-2 from Neosartorya fischeri (strain ATCC 1020 / DSM 3700 / CBS 544.65 / FGSC A1164 / JCM 1740 / NRRL 181 / WB 181) (Aspergillus fischerianus).